The primary structure comprises 137 residues: Nucleoside diphosphate kinase (137 aa).

6 residues coordinate ATP: K9, F57, R85, T91, R102, and N112. The active-site Pros-phosphohistidine intermediate is the H115.

This sequence belongs to the NDK family. As to quaternary structure, homotetramer. Requires Mg(2+) as cofactor.

The protein localises to the cytoplasm. The catalysed reaction is a 2'-deoxyribonucleoside 5'-diphosphate + ATP = a 2'-deoxyribonucleoside 5'-triphosphate + ADP. It carries out the reaction a ribonucleoside 5'-diphosphate + ATP = a ribonucleoside 5'-triphosphate + ADP. In terms of biological role, major role in the synthesis of nucleoside triphosphates other than ATP. The ATP gamma phosphate is transferred to the NDP beta phosphate via a ping-pong mechanism, using a phosphorylated active-site intermediate. This chain is Nucleoside diphosphate kinase, found in Campylobacter jejuni subsp. jejuni serotype O:23/36 (strain 81-176).